The primary structure comprises 241 residues: Homeobox protein TGIF2LX (241 aa).

2 disordered regions span residues 1–56 (MEAA…PKGY) and 115–213 (RHGN…EYPD). The segment covering 21–39 (AKTQSPAQDTSTVSRNSAD) has biased composition (polar residues). Residues 48 to 111 (EHTKKPKGYL…INARRRILPD (64 aa)) constitute a DNA-binding region (homeobox; TALE-type).

It belongs to the TALE/TGIF homeobox family.

The protein localises to the nucleus. In terms of biological role, may have a transcription role in testis. In Hylobates lar (Lar gibbon), this protein is Homeobox protein TGIF2LX (TGIF2LX).